Reading from the N-terminus, the 572-residue chain is Delta-1-pyrroline-5-carboxylate dehydrogenase, mitochondrial (572 aa).

Position 300–305 (300–305 (GQISTR)) interacts with NAD(+). Residue glutamate 320 is the Proton acceptor of the active site. Residue cysteine 354 is the Nucleophile of the active site.

This sequence belongs to the aldehyde dehydrogenase family.

The protein resides in the mitochondrion matrix. The catalysed reaction is L-glutamate 5-semialdehyde + NAD(+) + H2O = L-glutamate + NADH + 2 H(+). Its pathway is amino-acid degradation; L-proline degradation into L-glutamate; L-glutamate from L-proline: step 2/2. The polypeptide is Delta-1-pyrroline-5-carboxylate dehydrogenase, mitochondrial (prnC) (Emericella nidulans (strain FGSC A4 / ATCC 38163 / CBS 112.46 / NRRL 194 / M139) (Aspergillus nidulans)).